Reading from the N-terminus, the 167-residue chain is Ribosome maturation factor RimM (167 aa).

One can recognise a PRC barrel domain in the interval 94–165 (EHEYYYSDII…TIKITPMEGL (72 aa)).

This sequence belongs to the RimM family. As to quaternary structure, binds ribosomal protein uS19.

The protein resides in the cytoplasm. Its function is as follows. An accessory protein needed during the final step in the assembly of 30S ribosomal subunit, possibly for assembly of the head region. Essential for efficient processing of 16S rRNA. May be needed both before and after RbfA during the maturation of 16S rRNA. It has affinity for free ribosomal 30S subunits but not for 70S ribosomes. The protein is Ribosome maturation factor RimM of Staphylococcus epidermidis (strain ATCC 12228 / FDA PCI 1200).